Consider the following 205-residue polypeptide: Polyamine-modulated factor 1 (205 aa).

The disordered stretch occupies residues 1–28; the sequence is MAEASSVNVGSGCAEKGPEELSQEPARP. A coiled-coil region spans residues 140–190; the sequence is YLLQQRDALQRRVQRQEAENRQLADAVLAGRRQLEELQLQAQARQQAWQAL.

As to quaternary structure, component of the MIS12 complex composed of MIS12, DSN1, NSL1 and PMF1. Interacts with COPS7A. Interacts via its coiled-coil domain with the leucine-zipper domain of NFE2L2. The interaction with NFE2L2 is required for the transcriptional regulation of SSAT.

Its subcellular location is the nucleus. The protein resides in the chromosome. The protein localises to the centromere. It is found in the kinetochore. Functionally, part of the MIS12 complex which is required for normal chromosome alignment and segregation and kinetochore formation during mitosis. May act as a cotranscription partner of NFE2L2 involved in regulation of polyamine-induced transcription of SSAT. In Bos taurus (Bovine), this protein is Polyamine-modulated factor 1 (PMF1).